The following is a 178-amino-acid chain: Nascent polypeptide-associated complex subunit alpha (178 aa).

The NAC-A/B domain occupies 16–80; sequence PKNEKKAREL…AKVDDMNQRI (65 aa). Positions 82–100 are enriched in low complexity; that stretch reads EAQAQQAQQEALQKAAADA. Residues 82–145 form a disordered region; the sequence is EAQAQQAQQE…DETGLDPKDI (64 aa). The span at 101–126 shows a compositional bias: basic and acidic residues; it reads GKTEDKSPEAITADLEKASLGDKKAE. The span at 127–139 shows a compositional bias: acidic residues; sequence DEEEDEGEIDETG. The 39-residue stretch at 140-178 folds into the UBA domain; sequence LDPKDIEIVVEQTQVSRAKAVKALRNHDGDMVNAIMDLS.

Belongs to the NAC-alpha family. In terms of assembly, part of the nascent polypeptide-associated complex (NAC), consisting of EGD2 and EGD1. NAC associates with ribosomes via EGD1.

The protein localises to the cytoplasm. Its subcellular location is the nucleus. Component of the nascent polypeptide-associated complex (NAC), a dynamic component of the ribosomal exit tunnel, protecting the emerging polypeptides from interaction with other cytoplasmic proteins to ensure appropriate nascent protein targeting. The NAC complex also promotes mitochondrial protein import by enhancing productive ribosome interactions with the outer mitochondrial membrane and blocks the inappropriate interaction of ribosomes translating non-secretory nascent polypeptides with translocation sites in the membrane of the endoplasmic reticulum. EGD2 may also be involved in transcription regulation. This Candida albicans (strain SC5314 / ATCC MYA-2876) (Yeast) protein is Nascent polypeptide-associated complex subunit alpha (EGD2).